The following is a 222-amino-acid chain: N-acetyltransferase 8F1 (222 aa).

The helical transmembrane segment at 53–73 (LVLVSGSWILAVICIFFLLLL) threads the bilayer. The N-acetyltransferase domain occupies 69–220 (FLLLLLRLLA…CTIQLKYSFP (152 aa)).

It belongs to the camello family.

It localises to the membrane. Functionally, may play a role in regulation of gastrulation. This chain is N-acetyltransferase 8F1, found in Mus musculus (Mouse).